The following is a 209-amino-acid chain: Uracil phosphoribosyltransferase (209 aa).

5-phospho-alpha-D-ribose 1-diphosphate-binding positions include arginine 79, arginine 104, and 131–139 (DPMLATGGS). Residues isoleucine 194 and 199–201 (GDA) contribute to the uracil site. Aspartate 200 serves as a coordination point for 5-phospho-alpha-D-ribose 1-diphosphate.

The protein belongs to the UPRTase family. Requires Mg(2+) as cofactor.

It catalyses the reaction UMP + diphosphate = 5-phospho-alpha-D-ribose 1-diphosphate + uracil. It participates in pyrimidine metabolism; UMP biosynthesis via salvage pathway; UMP from uracil: step 1/1. Its activity is regulated as follows. Allosterically activated by GTP. In terms of biological role, catalyzes the conversion of uracil and 5-phospho-alpha-D-ribose 1-diphosphate (PRPP) to UMP and diphosphate. This chain is Uracil phosphoribosyltransferase, found in Latilactobacillus sakei (Lactobacillus sakei).